Reading from the N-terminus, the 288-residue chain is Phenazine biosynthesis-like domain-containing protein (288 aa).

Residue Glu46 is part of the active site.

It belongs to the PhzF family. As to quaternary structure, interacts with UNRIP/MAWD.

This is Phenazine biosynthesis-like domain-containing protein (PBLD) from Bos taurus (Bovine).